The chain runs to 331 residues: MTIKVGINGFGRIGRIVFRAAQKRSDIEIVAINDLLDAEYMAYMLKYDSTHGRFDGTVEVKDGHLIVNGKKIRVTAERDPANLKWDEVGVDVVAEATGIFLTDETARKHITAGAKKVVLTGPSKDNTPMFVKGANFDKYEGQDIVSNASCTTNCLAPLAKVINDNFGIIEGLMTTVHATTATQKTVDGPSHKDWRGGRGASQNIIPSSTGAAKAVGKVLPELNGKLTGMAFRVPTPNVSVVDLTVRLEKAATYEQIKAAVKAAAEGEMKGVLGYTEDDVVSTDFNGEVCTSVFDAKAGIALNDNFVKLVSWYDNETGYSNKVLDLIAHISK.

NAD(+) is bound by residues 12–13, aspartate 34, arginine 78, and threonine 120; that span reads RI. D-glyceraldehyde 3-phosphate contacts are provided by residues 149 to 151, threonine 180, 209 to 210, and arginine 232; these read SCT and TG. Catalysis depends on cysteine 150, which acts as the Nucleophile. Asparagine 314 contributes to the NAD(+) binding site.

This sequence belongs to the glyceraldehyde-3-phosphate dehydrogenase family. In terms of assembly, homotetramer.

The protein localises to the cytoplasm. The enzyme catalyses D-glyceraldehyde 3-phosphate + phosphate + NAD(+) = (2R)-3-phospho-glyceroyl phosphate + NADH + H(+). The protein operates within carbohydrate degradation; glycolysis; pyruvate from D-glyceraldehyde 3-phosphate: step 1/5. Functionally, catalyzes the oxidative phosphorylation of glyceraldehyde 3-phosphate (G3P) to 1,3-bisphosphoglycerate (BPG) using the cofactor NAD. The first reaction step involves the formation of a hemiacetal intermediate between G3P and a cysteine residue, and this hemiacetal intermediate is then oxidized to a thioester, with concomitant reduction of NAD to NADH. The reduced NADH is then exchanged with the second NAD, and the thioester is attacked by a nucleophilic inorganic phosphate to produce BPG. The chain is Glyceraldehyde-3-phosphate dehydrogenase (gapA) from Salmonella typhi.